The sequence spans 266 residues: Ribosomal RNA small subunit methyltransferase A (266 aa).

Residues Asn-10, Ile-12, Gly-37, Glu-58, Asp-82, and Asn-105 each coordinate S-adenosyl-L-methionine.

It belongs to the class I-like SAM-binding methyltransferase superfamily. rRNA adenine N(6)-methyltransferase family. RsmA subfamily.

The protein resides in the cytoplasm. The enzyme catalyses adenosine(1518)/adenosine(1519) in 16S rRNA + 4 S-adenosyl-L-methionine = N(6)-dimethyladenosine(1518)/N(6)-dimethyladenosine(1519) in 16S rRNA + 4 S-adenosyl-L-homocysteine + 4 H(+). Specifically dimethylates two adjacent adenosines (A1518 and A1519) in the loop of a conserved hairpin near the 3'-end of 16S rRNA in the 30S particle. May play a critical role in biogenesis of 30S subunits. The chain is Ribosomal RNA small subunit methyltransferase A from Mycoplasma mycoides subsp. mycoides SC (strain CCUG 32753 / NCTC 10114 / PG1).